Reading from the N-terminus, the 365-residue chain is MAKQTPLYDQHVACGARMVDFHGWMMPLHYGSQIDEHHAVRQDAGMFDVSHMTIVDLRGARTREFLRYLLANDVAKLTQPGKALYTGMLNASGGVIDDLIVYFLTEDYFRLVVNSATREKDLAWIEEHAAPYGVALTVRDDLALVAVQGPQAKERAATLFTPEQKSAVEGMKPFFGVQAGDLFIATTGYTGEAGYEIALPKEQVVDFWQKLLAAGVKPAGLGARDTLRLEAGMNLYGQEMDEGVSPLAANMGWTIAWLPEDRQFIGREALEKQREMGTEQLVGLIMTEKGVLRNELPVRFTDEAGQTHEGIITSGSFSPTLGFSIALARVPAGIGEQAIVQIRNREMPVKVTKPGFVRAGKPLTN.

This sequence belongs to the GcvT family. In terms of assembly, the glycine cleavage system is composed of four proteins: P, T, L and H.

The enzyme catalyses N(6)-[(R)-S(8)-aminomethyldihydrolipoyl]-L-lysyl-[protein] + (6S)-5,6,7,8-tetrahydrofolate = N(6)-[(R)-dihydrolipoyl]-L-lysyl-[protein] + (6R)-5,10-methylene-5,6,7,8-tetrahydrofolate + NH4(+). The glycine cleavage system catalyzes the degradation of glycine. The chain is Aminomethyltransferase from Serratia proteamaculans (strain 568).